Consider the following 332-residue polypeptide: Cytoplasmic phosphatidylinositol transfer protein 1 (332 aa).

Residues serine 119, serine 270, and serine 274 each carry the phosphoserine modification. Residues 267 to 285 are compositionally biased toward low complexity; that stretch reads SVRSAPSSAPSTPLSTDAP. The tract at residues 267–332 is disordered; the sequence is SVRSAPSSAP…SDKPCRPKSE (66 aa). A Phosphothreonine modification is found at threonine 278. Positions 322–332 are enriched in basic and acidic residues; it reads SSDKPCRPKSE.

The protein belongs to the PtdIns transfer protein family. PI transfer class IIB subfamily. Ubiquitously expressed.

It localises to the cytoplasm. The catalysed reaction is a 1,2-diacyl-sn-glycero-3-phospho-(1D-myo-inositol)(in) = a 1,2-diacyl-sn-glycero-3-phospho-(1D-myo-inositol)(out). It carries out the reaction a 1,2-diacyl-sn-glycero-3-phosphate(in) = a 1,2-diacyl-sn-glycero-3-phosphate(out). In terms of biological role, catalyzes the transfer of phosphatidylinositol (PI) and phosphatidic acid (PA) between membranes. Binds PA derived from the phospholipase D signaling pathway and among the cellular PA species, preferably binds to the C16:0/16:1 and C16:1/18:1 PA species. Functionally, catalyzes the transfer of phosphatidylinositol between membranes. This Homo sapiens (Human) protein is Cytoplasmic phosphatidylinositol transfer protein 1 (PITPNC1).